The primary structure comprises 577 residues: MARLSRERYAQLYGPTTGDRIRLADTDLLVEITEDRCGGPGLAGDEAVFGGGKVLRESMGQGRVTRAEGAPDTVITGAVIIDYWGIIKADIGIRDGRIVAIGKAGNPNIMSGIHPDLVVGPSTEIIGGNGRIVTAGAIDCHVHLICPQVIAEALGSGITTIIGGGTGPAEGSKSTTVTPGGWHLARMLEALDSWPVNIALLGKGNTVNPDALWEQLRGGASGFKLHEDWGSSPAAIDACLTVADAAGVQVALHSDTLNEMGFVEDTLAAIAGRSIHTYHTEGAGGGHAPDIITVAAHPNVLPSSTNPTRPHTVNTLDEHLDMLMVCHHLNPRIPEDLAFAESRIRPSTIAAEDLLHDIGAISMIGSDSQAMGRVGEVVMRTWQTAHVMKQRRGALEGDPSGRYSADNNRARRYVAKYTICPAVAHGLDHEVGSVEVGKLADLVLWEPAFFGVRPHAVVKGGAIAWAAMGDANASIPTPQPVLPRPMFGASPAVAAATSVHFVAAQSIEAGLADQIAVDRRLVPVADVRAVGKADMPLNDAQPRIEVDPDTFTVRIDGEVWEQQPATELPMAQRYFLF.

Residues 136-577 (GAIDCHVHLI…LPMAQRYFLF (442 aa)) enclose the Urease domain. Ni(2+) contacts are provided by His141, His143, and Lys224. At Lys224 the chain carries N6-carboxylysine. His226 provides a ligand contact to substrate. Ni(2+) is bound by residues His253 and His279. His327 (proton donor) is an active-site residue. A Ni(2+)-binding site is contributed by Asp367.

This sequence belongs to the metallo-dependent hydrolases superfamily. Urease alpha subunit family. Heterotrimer of UreA (gamma), UreB (beta) and UreC (alpha) subunits. Three heterotrimers associate to form the active enzyme. Ni cation serves as cofactor. Post-translationally, carboxylation allows a single lysine to coordinate two nickel ions.

The protein resides in the cytoplasm. The enzyme catalyses urea + 2 H2O + H(+) = hydrogencarbonate + 2 NH4(+). It functions in the pathway nitrogen metabolism; urea degradation; CO(2) and NH(3) from urea (urease route): step 1/1. This Mycobacterium marinum (strain ATCC BAA-535 / M) protein is Urease subunit alpha.